We begin with the raw amino-acid sequence, 415 residues long: MPQTLTEKILSRASGKSVAPGDVVEVKVDIAAFHDLTGYHVIEVMEKAGMLKVFDKQKIVIAFDHLAPPPDVRSAEIQTQIRKFVKELKIPNFHDINVGILHQILLEKYANPGYVIVAADSHTTTSGAVGAFAQGLGASDVAAAVITGKTWVMVPQSFKIMLEGKPGKWINGKDVALKILGDFKADYFNGMSIEIFVREPSAFPMDFRATVSNMGIEMNADALMFVPDEETVNYIKTNRGYEPNIVRPDEGAKYVDEYTIDLGKLEPLVAAPHSVDNVKTVNEVEGLDVDQVFIGSCTNGRISDFEIAAKILKGKRVKSRCIAIPASYDLFKKAMELGYIETLVNAGCIVTYGTCGPCLGGHFGVAGPGETIVSTSSRNFKGRMGSNDSKVYLAGPAVAAASALQGKITDPRRFS.

Residues Cys297, Cys355, and Cys358 each contribute to the [4Fe-4S] cluster site.

This sequence belongs to the aconitase/IPM isomerase family. LeuC type 2 subfamily. As to quaternary structure, heterodimer of LeuC and LeuD. [4Fe-4S] cluster is required as a cofactor.

It carries out the reaction (2R,3S)-3-isopropylmalate = (2S)-2-isopropylmalate. Its pathway is amino-acid biosynthesis; L-leucine biosynthesis; L-leucine from 3-methyl-2-oxobutanoate: step 2/4. Its function is as follows. Catalyzes the isomerization between 2-isopropylmalate and 3-isopropylmalate, via the formation of 2-isopropylmaleate. In Sulfurisphaera tokodaii (strain DSM 16993 / JCM 10545 / NBRC 100140 / 7) (Sulfolobus tokodaii), this protein is 3-isopropylmalate dehydratase large subunit.